The primary structure comprises 403 residues: Ribosomal RNA large subunit methyltransferase I (403 aa).

Residues 9 to 88 (YPRLVLSKGR…EPVDIAFFTR (80 aa)) form the PUA domain.

This sequence belongs to the methyltransferase superfamily. RlmI family.

The protein resides in the cytoplasm. It carries out the reaction cytidine(1962) in 23S rRNA + S-adenosyl-L-methionine = 5-methylcytidine(1962) in 23S rRNA + S-adenosyl-L-homocysteine + H(+). Its function is as follows. Specifically methylates the cytosine at position 1962 (m5C1962) of 23S rRNA. This Salmonella arizonae (strain ATCC BAA-731 / CDC346-86 / RSK2980) protein is Ribosomal RNA large subunit methyltransferase I.